Consider the following 315-residue polypeptide: Cross-pathway control WD-repeat protein 2 (315 aa).

7 WD repeats span residues 14-54 (GHKG…DSYG), 62-101 (GHNH…TTRR), 104-144 (GHTS…YDIK), 147-188 (CHTE…LKTN), 191-230 (GHTG…HLYS), 232-270 (EAGD…IVDE), and 282-315 (GRQP…TVTS).

Belongs to the WD repeat G protein beta family. Ribosomal protein RACK1 subfamily.

Component of the ribosome, a large ribonucleoprotein complex responsible for the synthesis of proteins in the cell. The small ribosomal subunit (SSU) binds messenger RNAs (mRNAs) and translates the encoded message by selecting cognate aminoacyl-transfer RNA (tRNA) molecules. The large subunit (LSU) contains the ribosomal catalytic site termed the peptidyl transferase center (PTC), which catalyzes the formation of peptide bonds, thereby polymerizing the amino acids delivered by tRNAs into a polypeptide chain. The nascent polypeptides leave the ribosome through a tunnel in the LSU and interact with protein factors that function in enzymatic processing, targeting, and the membrane insertion of nascent chains at the exit of the ribosomal tunnel. Plays in important role in the regulation of vegetative growth and fruiting body development. Especially, positively regulates the expression of genes involved in fruiting body development such as FVFD30 and FVFD16, as well as genes encoding for lectins and hydrophobins. Also regulates the expression of genes involved in cAMP signaling pathway. The protein is Cross-pathway control WD-repeat protein 2 of Flammulina velutipes (Agaricus velutipes).